A 469-amino-acid chain; its full sequence is MYLSLRLVSLALCIAPLASAGNNSTPLVQACTGYSFPRVACMYRYASKMPLDFYRKASVDISNVDTYSSTEVANDDSFQQVGKATFLVWDQQRGSEILGSDPAYDIVFTISTGGHEAPVYVPDTNELWFSELGKGELHQQVISLDGDSPTISEVLTDPPLYAPSGARYRNGKIYFSAGGGNSTLEGGPYHPGIYSVDPKTRKSTIEVNNYFGWYFNQVSMPTAHTRGGSPLSHFCTLVDPRLVAHGLTFQHRPTTWILTNTVASGLVILVSSWTRDLTLVHTDAAIVLARNHGTSTVAPQVQASVYRYDPETGAVNIVDDTLHCPNGVAFSPDYKTLYLTDTDAGVPMIDPRVPLSEVPSLQYNSTNRRTVYAFDVSEDGSYLKNRRPIYTAKDFVPDGLKVASNGYVITGAGKGVDILDTTGTPLLSIQTNFTAVNMVFGGKNLDELWIVGHGAVARARLNLTGPALE.

The signal sequence occupies residues 1–20; sequence MYLSLRLVSLALCIAPLASA.

The protein belongs to the SMP-30/CGR1 family.

It functions in the pathway secondary metabolite biosynthesis. Lactonohydrolase; part of the gene cluster that mediates the biosynthesis of oryzines, natural products with an unusual maleidride backbone. The two subunits of the fungal fatty acid synthase oryfasA and oryfasB probably form octenoic acid. This fatty acid is most likely activated by the acyl-CoA ligase oryP to give octenyl-CoA before the citrate synthase-like protein oryE catalyzes condensation with oxaloacetate to form tricarboxylic acid. The next steps of the pathways are conjectural, but a favorite possible route has been proposed, beginning with decarboxylation and concomitant dehydration by the decarboxylase oryM, followed by tautomerization, which may lead to the production of a diene intermediate. Reduction of this diene intermediate could give the known metabolite piliformic acid. On the pathway to oryzine B and oryzine A, however, hydroxylation of the diene by the alpha-ketoglutarate-dependent dioxygenase oryG and lactonisation by the lactonohydrolases oryH or oryL could give oryzine B directly. Finally, enoyl reduction by the dehydrogenase oryD would then convert oryzine B into oryzine A. This Aspergillus oryzae (strain ATCC 42149 / RIB 40) (Yellow koji mold) protein is Lactonohydrolase oryH.